The following is a 1116-amino-acid chain: Rho GTPase-activating protein 45 (1116 aa).

The disordered stretch occupies residues 1-72 (MFSRKKRELM…RPTSLSRHAS (72 aa)). Positions 22–31 (GSPNPQSSSG) are enriched in polar residues. A phosphoserine mark is found at Ser-23, Ser-72, Ser-92, and Ser-98. In terms of domain architecture, F-BAR spans 268–538 (EEVDMLLQRC…SSKLYDPGQQ (271 aa)). Residues 375–498 (EHERRRKEIK…QIQEVIRQSD (124 aa)) adopt a coiled-coil conformation. Residues 422–457 (VAKAEEEQQGTGPGAGTAASKALDKRRRLEEEAKNK) are disordered. The span at 448 to 457 (RRLEEEAKNK) shows a compositional bias: basic and acidic residues. 4 positions are modified to phosphoserine: Ser-568, Ser-577, Ser-591, and Ser-618. The disordered stretch occupies residues 569-658 (PIMRTRKGSF…MSSSEELGDQ (90 aa)). Positions 621–635 (ISISDTEVGLDTSSG) are enriched in polar residues. Positions 643–652 (TSSSGTMSSS) are enriched in low complexity. Residues 699–744 (THRLRKLRTPAKCRECNSYVYFQGAECEECCLACHKKCLETLAIQC) form a Phorbol-ester/DAG-type zinc finger. Residues 758 to 971 (QDFSQAALST…TLIVHYGLVF (214 aa)) enclose the Rho-GAP domain. Residues Ser-946, Ser-1017, Ser-1020, and Ser-1022 each carry the phosphoserine modification. Disordered stretches follow at residues 1004–1035 (EEAEDGSRESHAASNDSDSELEDASDPLSSSD) and 1050–1116 (AGLE…PQFV). 2 stretches are compositionally biased toward polar residues: residues 1080–1090 (FNTNQSNNTSR) and 1105–1116 (GGTSQERQPQFV).

The protein resides in the cytoplasm. It is found in the cell projection. Its subcellular location is the ruffle membrane. Its function is as follows. Contains a GTPase activator for the Rho-type GTPases (RhoGAP) domain that would be able to negatively regulate the actin cytoskeleton as well as cell spreading. However, also contains N-terminally a BAR-domin which is able to play an autoinhibitory effect on this RhoGAP activity. The polypeptide is Rho GTPase-activating protein 45 (Mus musculus (Mouse)).